The following is a 499-amino-acid chain: Beta-amylase (499 aa).

The substrate site is built by Asp55, His95, and Asp103. Catalysis depends on Glu188, which acts as the Proton donor. Lys298, His303, and Thr345 together coordinate substrate. Residue Glu383 is the Proton acceptor of the active site. Residues 384–385 and Arg423 each bind substrate; that span reads NA.

Belongs to the glycosyl hydrolase 14 family. In terms of assembly, homotetramer.

It carries out the reaction Hydrolysis of (1-&gt;4)-alpha-D-glucosidic linkages in polysaccharides so as to remove successive maltose units from the non-reducing ends of the chains.. This Ipomoea batatas (Sweet potato) protein is Beta-amylase (BMY1).